Reading from the N-terminus, the 208-residue chain is MKVVEVKHPLVKHKIGLMREGDISTKRFRELAKEVGSLLTYEATSDFETEKVTIDGWNGPVEVDQIKGKKVTVVPILRAGLGMMDGVLEHMPSARVSVVGIYRDEETLQPVPYFEKIVSNIEERLALVIDPMLATGGSMIATIDLLKKKGCQSIKVLVLVAAPEGIKALEAAHPDVELYCASVDQGLNEKGYIVPGLGDAGDKIFGTK.

Residues Arg78, Arg103, and 130–138 (DPMLATGGS) contribute to the 5-phospho-alpha-D-ribose 1-diphosphate site. Uracil-binding positions include Ile193 and 198–200 (GDA). 5-phospho-alpha-D-ribose 1-diphosphate is bound at residue Asp199.

It belongs to the UPRTase family. It depends on Mg(2+) as a cofactor.

It catalyses the reaction UMP + diphosphate = 5-phospho-alpha-D-ribose 1-diphosphate + uracil. Its pathway is pyrimidine metabolism; UMP biosynthesis via salvage pathway; UMP from uracil: step 1/1. Its activity is regulated as follows. Allosterically activated by GTP. Catalyzes the conversion of uracil and 5-phospho-alpha-D-ribose 1-diphosphate (PRPP) to UMP and diphosphate. The sequence is that of Uracil phosphoribosyltransferase from Aeromonas salmonicida (strain A449).